The following is an 81-amino-acid chain: Delta-conotoxin-like Ac6.3 (81 aa).

The N-terminal stretch at Met1 to Ala22 is a signal peptide. The propeptide occupies Asp23–Arg51. 3 disulfide bridges follow: Cys54/Cys69, Cys61/Cys73, and Cys68/Cys78.

This sequence belongs to the conotoxin O1 superfamily. Expressed by the venom duct.

It localises to the secreted. Delta-conotoxins bind to site 6 of voltage-gated sodium channels (Nav) and inhibit the inactivation process. The sequence is that of Delta-conotoxin-like Ac6.3 from Conus achatinus (Little frog cone).